Here is a 340-residue protein sequence, read N- to C-terminus: Phospho-N-acetylmuramoyl-pentapeptide-transferase (340 aa).

9 consecutive transmembrane segments (helical) span residues 24–44, 69–89, 95–115, 129–149, 156–176, 196–216, 235–255, 260–280, and 316–336; these read VPFG…LPVL, TMGG…GSGW, AVAL…WLVI, LLLQ…QGIP, GIGA…VLVG, ALVL…LVAF, LFMG…LALL, WALA…ILQV, and VVGC…AWWH.

This sequence belongs to the glycosyltransferase 4 family. MraY subfamily. Mg(2+) serves as cofactor.

The protein localises to the cell inner membrane. The enzyme catalyses UDP-N-acetyl-alpha-D-muramoyl-L-alanyl-gamma-D-glutamyl-meso-2,6-diaminopimeloyl-D-alanyl-D-alanine + di-trans,octa-cis-undecaprenyl phosphate = di-trans,octa-cis-undecaprenyl diphospho-N-acetyl-alpha-D-muramoyl-L-alanyl-D-glutamyl-meso-2,6-diaminopimeloyl-D-alanyl-D-alanine + UMP. It functions in the pathway cell wall biogenesis; peptidoglycan biosynthesis. Its function is as follows. Catalyzes the initial step of the lipid cycle reactions in the biosynthesis of the cell wall peptidoglycan: transfers peptidoglycan precursor phospho-MurNAc-pentapeptide from UDP-MurNAc-pentapeptide onto the lipid carrier undecaprenyl phosphate, yielding undecaprenyl-pyrophosphoryl-MurNAc-pentapeptide, known as lipid I. The polypeptide is Phospho-N-acetylmuramoyl-pentapeptide-transferase (Synechococcus sp. (strain JA-3-3Ab) (Cyanobacteria bacterium Yellowstone A-Prime)).